The following is a 970-amino-acid chain: Pentatricopeptide repeat-containing protein At1g18485 (970 aa).

PPR repeat units follow at residues 119-149 (DDVLCTRIITMYAMCGSPDDSRFVFDALRSK), 150-185 (NLFQWNAVISSYSRNELYDEVLETFIEMISTTDLLP), 186-220 (DHFTYPCVIKACAGMSDVGIGLAVHGLVVKTGLVE), 221-251 (DVFVGNALVSFYGTHGFVTDALQLFDIMPER), 252-282 (NLVSWNSMIRVFSDNGFSEESFLLLGEMMEE), 291-325 (DVATLVTVLPVCAREREIGLGKGVHGWAVKLRLDK), 326-356 (ELVLNNALMDMYSKCGCITNAQMIFKMNNNK), 357-391 (NVVSWNTMVGGFSAEGDTHGTFDVLRQMLAGGEDV), 394-428 (DEVTILNAVPVCFHESFLPSLKELHCYSLKQEFVY), 429-459 (NELVANAFVASYAKCGSLSYAQRVFHGIRSK), 460-494 (TVNSWNALIGGHAQSNDPRLSLDAHLQMKISGLLP), 495-529 (DSFTVCSLLSACSKLKSLRLGKEVHGFIIRNWLER), 530-560 (DLFVYLSVLSLYIHCGELCTVQALFDAMEDK), 561-595 (SLVSWNTVITGYLQNGFPDRALGVFRQMVLYGIQL), 597-630 (GISMMPVFGACSLLPSLRLGREAHAYALKHLLED), 631-661 (DAFIACSLIDMYAKNGSITQSSKVFNGLKEK), 662-696 (STASWNAMIMGYGIHGLAKEAIKLFEEMQRTGHNP), 697-727 (DDLTFLGVLTACNHSGLIHEGLRYLDQMKSS), and 733-764 (NLKHYACVIDMLGRAGQLDKALRVVAEEMSEE). The segment at 770–845 (WKSLLSSCRI…AGCSWIELNR (76 aa)) is type E motif. Positions 846–875 (KVFSFVVGERFLDGFEEIKSLWSILEMKIS) are type E(+) motif. Residues 876 to 970 (KMGYRPDTMS…NGVCSCGDYW (95 aa)) form a type DYW motif region.

The protein belongs to the PPR family. PCMP-H subfamily.

This Arabidopsis thaliana (Mouse-ear cress) protein is Pentatricopeptide repeat-containing protein At1g18485 (PCMP-H8).